We begin with the raw amino-acid sequence, 748 residues long: Long-chain-alcohol oxidase FAO4B (748 aa).

The segment covering 1–18 (MEDVRRRNRGHPLLRSKK) has biased composition (basic residues). The segment at 1 to 25 (MEDVRRRNRGHPLLRSKKRGEGYNH) is disordered. 2 consecutive transmembrane segments (helical) span residues 89-109 (IILM…SLCL) and 140-160 (FLLP…FYFF). 238–253 (CDAVVVGSGSGGGVAA) contributes to the FAD binding site. Catalysis depends on His-679, which acts as the Proton acceptor.

It belongs to the GMC oxidoreductase family.

It localises to the membrane. The enzyme catalyses a long-chain primary fatty alcohol + O2 = a long-chain fatty aldehyde + H2O2. In terms of biological role, long-chain fatty alcohol oxidase involved in the omega-oxidation pathway of lipid degradation. The polypeptide is Long-chain-alcohol oxidase FAO4B (FAO4B) (Arabidopsis thaliana (Mouse-ear cress)).